A 262-amino-acid polypeptide reads, in one-letter code: Short-chain Z-isoprenyl diphosphate synthase (262 aa).

The active site involves aspartate 40. Aspartate 40 is a Mg(2+) binding site. Substrate-binding positions include 41 to 44 (GNRR), tryptophan 45, and 86 to 88 (STE). Asparagine 89 (proton acceptor) is an active-site residue. Substrate-binding positions include arginine 92, arginine 211, and 217–219 (RLS). Glutamate 230 is a binding site for Mg(2+).

It belongs to the UPP synthase family. Z-FPP synthase subfamily. The cofactor is Mg(2+).

It catalyses the reaction isopentenyl diphosphate + (2E)-geranyl diphosphate = (2Z,6E)-farnesyl diphosphate + diphosphate. The protein operates within phospholipid metabolism; decaprenyl phosphate biosynthesis. Generates Z-farnesyl diphosphate (Z-FPP) from isopentenyl pyrophosphate (IPP). Z-FPP is the precursor of decaprenyl diphosphate, which has a central role in the biosynthesis of the mycobacterial cell wall. The sequence is that of Short-chain Z-isoprenyl diphosphate synthase from Mycobacterium bovis (strain ATCC BAA-935 / AF2122/97).